The following is a 104-amino-acid chain: Large ribosomal subunit protein uL24 (104 aa).

The protein belongs to the universal ribosomal protein uL24 family. As to quaternary structure, part of the 50S ribosomal subunit.

One of two assembly initiator proteins, it binds directly to the 5'-end of the 23S rRNA, where it nucleates assembly of the 50S subunit. In terms of biological role, one of the proteins that surrounds the polypeptide exit tunnel on the outside of the subunit. The polypeptide is Large ribosomal subunit protein uL24 (Bartonella bacilliformis (strain ATCC 35685 / KC583 / Herrer 020/F12,63)).